The following is a 131-amino-acid chain: Small ribosomal subunit protein uS8 (131 aa).

Belongs to the universal ribosomal protein uS8 family. In terms of assembly, part of the 30S ribosomal subunit. Contacts proteins S5 and S12.

One of the primary rRNA binding proteins, it binds directly to 16S rRNA central domain where it helps coordinate assembly of the platform of the 30S subunit. The sequence is that of Small ribosomal subunit protein uS8 from Bordetella petrii (strain ATCC BAA-461 / DSM 12804 / CCUG 43448).